Here is a 636-residue protein sequence, read N- to C-terminus: 1-phosphatidylinositol 4,5-bisphosphate phosphodiesterase zeta-1 (636 aa).

The 36-residue stretch at 35-70 folds into the EF-hand domain; the sequence is CNTIHVKCIFKDNDRLKQGRITIEEFRTIYRIIAHR. A PI-PLC X-box domain is found at 155 to 299; the sequence is QDMTHPLSDY…LKFKILVRNK (145 aa). Catalysis depends on residues histidine 170 and histidine 215. Residues 311-338 form a disordered region; the sequence is KGFDKHGQVQECEEEEEAEQEEEENEVR. Residues 318–345 adopt a coiled-coil conformation; the sequence is QVQECEEEEEAEQEEEENEVRDSEILDI. Over residues 321–336 the composition is skewed to acidic residues; that stretch reads ECEEEEEAEQEEEENE. Residues 375–491 form the PI-PLC Y-box domain; it reads LSDLVIYTKV…GYILKPHFLR (117 aa). Residues 491 to 617 form the C2 domain; sequence RDGKSIFNPN…KGYRRVPLFS (127 aa).

As to quaternary structure, interacts via its C2 domain with PtdIns(3)P and, to a lesser extent, PtdIns(5)P in vitro. Ca(2+) serves as cofactor. In terms of tissue distribution, expressed specifically in testis.

The protein localises to the nucleus. It is found in the cytoplasm. It localises to the perinuclear region. It carries out the reaction a 1,2-diacyl-sn-glycero-3-phospho-(1D-myo-inositol-4,5-bisphosphate) + H2O = 1D-myo-inositol 1,4,5-trisphosphate + a 1,2-diacyl-sn-glycerol + H(+). Its function is as follows. The production of the second messenger molecules diacylglycerol (DAG) and inositol 1,4,5-trisphosphate (IP3) is mediated by activated phosphatidylinositol-specific phospholipase C enzymes. In vitro, hydrolyzes PtdIns(4,5)P2 in a Ca(2+)-dependent manner. Triggers intracellular Ca(2+) oscillations in oocytes solely during M phase and is involved in inducing oocyte activation and initiating embryonic development up to the blastocyst stage. Is therefore a strong candidate for the egg-activating soluble sperm factor that is transferred from the sperm into the egg cytoplasm following gamete membrane fusion. May exert an inhibitory effect on phospholipase-C-coupled processes that depend on calcium ions and protein kinase C, including CFTR trafficking and function. The sequence is that of 1-phosphatidylinositol 4,5-bisphosphate phosphodiesterase zeta-1 from Sus scrofa (Pig).